A 417-amino-acid chain; its full sequence is Carboxypeptidase A2 (417 aa).

An N-terminal signal peptide occupies residues 1–16 (MRLTLLLAALLGYIYC). Positions 17–112 (QETFVGDQVL…EMLFNQQRER (96 aa)) are cleaved as a propeptide — activation peptide. The Peptidase M14 domain maps to 120–412 (AYHTLEEIYQ…LGLKTIMEHV (293 aa)). 2 residues coordinate Zn(2+): H177 and E180. Residues 177–180 (HARE), R235, and 252–253 (NR) contribute to the substrate site. C246 and C269 are disulfide-bonded. Zn(2+) is bound at residue H304. Position 305 to 306 (305 to 306 (SY)) interacts with substrate. C318 and C352 are disulfide-bonded. Y356 serves as a coordination point for substrate. E378 (proton donor/acceptor) is an active-site residue.

This sequence belongs to the peptidase M14 family. Zn(2+) is required as a cofactor.

The protein resides in the secreted. The catalysed reaction is Similar to that of carboxypeptidase A (EC 3.4.17.1), but with a preference for bulkier C-terminal residues.. Its function is as follows. Carboxypeptidase that catalyzes the release of a C-terminal amino acid, with a preference for large aromatic C-terminal residues. This is Carboxypeptidase A2 (Cpa2) from Rattus norvegicus (Rat).